A 350-amino-acid chain; its full sequence is tRNA uridine(34) hydroxylase (350 aa).

The Rhodanese domain occupies 146-240 (DDPDALFIDM…YARKAREQGL (95 aa)). Catalysis depends on Cys200, which acts as the Cysteine persulfide intermediate.

Belongs to the TrhO family.

It carries out the reaction uridine(34) in tRNA + AH2 + O2 = 5-hydroxyuridine(34) in tRNA + A + H2O. Functionally, catalyzes oxygen-dependent 5-hydroxyuridine (ho5U) modification at position 34 in tRNAs. The protein is tRNA uridine(34) hydroxylase of Shigella flexneri serotype 5b (strain 8401).